The primary structure comprises 367 residues: Ferrochelatase (367 aa).

Fe cation contacts are provided by histidine 226 and glutamate 307.

Belongs to the ferrochelatase family.

It is found in the cytoplasm. It catalyses the reaction heme b + 2 H(+) = protoporphyrin IX + Fe(2+). It participates in porphyrin-containing compound metabolism; protoheme biosynthesis; protoheme from protoporphyrin-IX: step 1/1. In terms of biological role, catalyzes the ferrous insertion into protoporphyrin IX. The protein is Ferrochelatase of Burkholderia mallei (strain NCTC 10247).